A 211-amino-acid chain; its full sequence is Large ribosomal subunit protein uL4 (211 aa).

Residues 50-77 form a disordered region; that stretch reads STLTKGEVSGGGKKPYKQKHTGKARQGS. Residues 63–72 show a composition bias toward basic residues; sequence KPYKQKHTGK.

Belongs to the universal ribosomal protein uL4 family. In terms of assembly, part of the 50S ribosomal subunit.

In terms of biological role, one of the primary rRNA binding proteins, this protein initially binds near the 5'-end of the 23S rRNA. It is important during the early stages of 50S assembly. It makes multiple contacts with different domains of the 23S rRNA in the assembled 50S subunit and ribosome. Functionally, forms part of the polypeptide exit tunnel. The polypeptide is Large ribosomal subunit protein uL4 (Mycoplasma genitalium (strain ATCC 33530 / DSM 19775 / NCTC 10195 / G37) (Mycoplasmoides genitalium)).